The primary structure comprises 217 residues: MKFFIDTANVEEIKKANDMGVICGVTTNPSLIAKEGRDFKEVITEITNIVDGPISGEVKATTEDAESMIKEGREIAKIHPNMVVKIPMTVEGLKATKVLSQEGIKTNVTLVFSANQALLAARAGATYVSPFLGRLDDISTPGIDLIRTISDIFEIYNLPTEIIAASVRNPVHITDCALAGAHIATVPYSVIVQCTKHPLTDAGIEKFKADYRAVFGE.

The active-site Schiff-base intermediate with substrate is Lys85.

This sequence belongs to the transaldolase family. Type 3B subfamily.

The protein resides in the cytoplasm. The enzyme catalyses D-sedoheptulose 7-phosphate + D-glyceraldehyde 3-phosphate = D-erythrose 4-phosphate + beta-D-fructose 6-phosphate. Its pathway is carbohydrate degradation; pentose phosphate pathway; D-glyceraldehyde 3-phosphate and beta-D-fructose 6-phosphate from D-ribose 5-phosphate and D-xylulose 5-phosphate (non-oxidative stage): step 2/3. Its function is as follows. Transaldolase is important for the balance of metabolites in the pentose-phosphate pathway. The polypeptide is Probable transaldolase (Lachnoclostridium phytofermentans (strain ATCC 700394 / DSM 18823 / ISDg) (Clostridium phytofermentans)).